A 284-amino-acid polypeptide reads, in one-letter code: Trimeric intracellular cation channel type B-B (284 aa).

At 1–15 (MESLSEVSVQFSQLS) the chain is on the lumenal side. A helical transmembrane segment spans residues 16–32 (MFPFFDMAHYLASVMSA). Residues 33–44 (REQAGALDIASH) lie on the Cytoplasmic side of the membrane. The helical transmembrane segment at 45 to 68 (SPMASWFSAMLHCFGGGILSSILL) threads the bilayer. At 69-79 (AEPPVGILANT) the chain is on the lumenal side. Residues 80 to 99 (TNIMLASAIWYMVYYFPYDL) form a helical membrane-spanning segment. Residues 100 to 102 (FYN) lie on the Cytoplasmic side of the membrane. The helical transmembrane segment at 103–121 (CFFFLPIRLIAAGMKEVTR) threads the bilayer. The a 1,2-diacyl-sn-glycero-3-phospho-(1D-myo-inositol-4,5-bisphosphate) site is built by lysine 117 and arginine 121. The Lumenal segment spans residues 122–139 (TWKILSGITHAHSHYKDA). The chain crosses the membrane as a helical span at residues 140–157 (WLVMITIGWARGAGGGLI). Residues 158–178 (SNFEQLVRGVWKPESNEFLKM) lie on the Cytoplasmic side of the membrane. Residues 179–196 (SYPVKVTLIGAVLFTLQH) form a helical membrane-spanning segment. The Lumenal segment spans residues 197–204 (GHYLPISR). Residues 205–225 (HNLMFIYTMFLVSIKVTMMLT) traverse the membrane as a helical segment. At 226-284 (HSAGSPFLPLETPLHRILFGLRQNQAEVRESPSSSGAKGKPSKKTLDKDSGEQSNKKDK) the chain is on the cytoplasmic side. Residues 250 to 284 (QAEVRESPSSSGAKGKPSKKTLDKDSGEQSNKKDK) form a disordered region. The segment covering 269–284 (KTLDKDSGEQSNKKDK) has biased composition (basic and acidic residues).

The protein belongs to the TMEM38 family. Homotrimer; conformation seems to be controled by binding to diacylglycerol (DAG).

The protein localises to the endoplasmic reticulum membrane. The enzyme catalyses K(+)(in) = K(+)(out). Its activity is regulated as follows. Channel activity is activated by increased cytosolic Ca(2+) levels and blocked by luminal high Ca(2+) levels. Functionally, intracellular monovalent cation channel required for maintenance of rapid intracellular calcium release. Acts as a potassium counter-ion channel that functions in synchronization with calcium release from intracellular stores. Activated by increased cytosolic Ca(2+) levels. The polypeptide is Trimeric intracellular cation channel type B-B (tmem38b-b) (Xenopus laevis (African clawed frog)).